The chain runs to 462 residues: Exodeoxyribonuclease 7 large subunit (462 aa).

The protein belongs to the XseA family. Heterooligomer composed of large and small subunits.

It is found in the cytoplasm. It catalyses the reaction Exonucleolytic cleavage in either 5'- to 3'- or 3'- to 5'-direction to yield nucleoside 5'-phosphates.. Functionally, bidirectionally degrades single-stranded DNA into large acid-insoluble oligonucleotides, which are then degraded further into small acid-soluble oligonucleotides. This chain is Exodeoxyribonuclease 7 large subunit, found in Pectobacterium atrosepticum (strain SCRI 1043 / ATCC BAA-672) (Erwinia carotovora subsp. atroseptica).